The sequence spans 232 residues: Phosphatidylserine decarboxylase proenzyme (232 aa).

Ser-190 (schiff-base intermediate with substrate; via pyruvic acid) is an active-site residue. Ser-190 is subject to Pyruvic acid (Ser); by autocatalysis.

This sequence belongs to the phosphatidylserine decarboxylase family. PSD-A subfamily. Heterodimer of a large membrane-associated beta subunit and a small pyruvoyl-containing alpha subunit. Pyruvate serves as cofactor. Post-translationally, is synthesized initially as an inactive proenzyme. Formation of the active enzyme involves a self-maturation process in which the active site pyruvoyl group is generated from an internal serine residue via an autocatalytic post-translational modification. Two non-identical subunits are generated from the proenzyme in this reaction, and the pyruvate is formed at the N-terminus of the alpha chain, which is derived from the carboxyl end of the proenzyme. The post-translation cleavage follows an unusual pathway, termed non-hydrolytic serinolysis, in which the side chain hydroxyl group of the serine supplies its oxygen atom to form the C-terminus of the beta chain, while the remainder of the serine residue undergoes an oxidative deamination to produce ammonia and the pyruvoyl prosthetic group on the alpha chain.

Its subcellular location is the cell membrane. It catalyses the reaction a 1,2-diacyl-sn-glycero-3-phospho-L-serine + H(+) = a 1,2-diacyl-sn-glycero-3-phosphoethanolamine + CO2. It functions in the pathway phospholipid metabolism; phosphatidylethanolamine biosynthesis; phosphatidylethanolamine from CDP-diacylglycerol: step 2/2. Catalyzes the formation of phosphatidylethanolamine (PtdEtn) from phosphatidylserine (PtdSer). The polypeptide is Phosphatidylserine decarboxylase proenzyme (Rhodopseudomonas palustris (strain TIE-1)).